A 173-amino-acid polypeptide reads, in one-letter code: Regulatory protein RecX (173 aa).

It belongs to the RecX family.

Its subcellular location is the cytoplasm. Modulates RecA activity. This Mycobacterium avium (strain 104) protein is Regulatory protein RecX.